The following is a 328-amino-acid chain: L-lactate dehydrogenase (328 aa).

NAD(+) contacts are provided by residues V18, E39, K46, Y71, and 85 to 86; that span reads GA. Q88 and R94 together coordinate substrate. NAD(+)-binding positions include S107, 124–126, and S149; that span reads AAN. 126 to 129 contributes to the substrate binding site; sequence NPVD. 154 to 157 lines the substrate pocket; that stretch reads DSAR. Positions 159 and 174 each coordinate beta-D-fructose 1,6-bisphosphate. Residue H181 is the Proton acceptor of the active site. Y226 bears the Phosphotyrosine mark. T235 provides a ligand contact to substrate.

The protein belongs to the LDH/MDH superfamily. LDH family. Homotetramer.

The protein localises to the cytoplasm. The enzyme catalyses (S)-lactate + NAD(+) = pyruvate + NADH + H(+). The protein operates within fermentation; pyruvate fermentation to lactate; (S)-lactate from pyruvate: step 1/1. With respect to regulation, allosterically activated by fructose 1,6-bisphosphate (FBP). Functionally, catalyzes the conversion of lactate to pyruvate. The sequence is that of L-lactate dehydrogenase from Streptococcus thermophilus (strain CNRZ 1066).